Here is an 837-residue protein sequence, read N- to C-terminus: Protein ROD1 (837 aa).

Residues Ser138 and Ser141 each carry the phosphoserine modification. Residue Lys401 forms a Glycyl lysine isopeptide (Lys-Gly) (interchain with G-Cter in ubiquitin) linkage. Ser436 is modified (phosphoserine). The PY-motif motif lies at 487-490 (PPNY). The residue at position 536 (Ser536) is a Phosphoserine. The PY-motif signature appears at 656-659 (PPAY). 2 disordered regions span residues 675–726 (ERPQ…SVSL) and 763–837 (SFTS…RDRS). Positions 685–703 (TSSLLPLPGSSKSSNNLKR) are enriched in low complexity. Residues 716–726 (PRNNSGSSVSL) show a composition bias toward polar residues. Phosphoserine is present on residues Ser720 and Ser725. The segment covering 763-773 (SFTSNSSSKNN) has biased composition (low complexity). Residues 774–792 (SHFDKTDSTSDANKPREEE) show a composition bias toward basic and acidic residues. Low complexity predominate over residues 805 to 815 (SSSVRSNNSNS).

Belongs to the arrestin family. Interacts with RSP5 via its 2 PY-motifs.

It is found in the membrane. Functionally, mediates resistance to o-dinitrobenzene, calcium and zinc. The chain is Protein ROD1 (ROD1) from Saccharomyces cerevisiae (strain ATCC 204508 / S288c) (Baker's yeast).